The primary structure comprises 56 residues: Large ribosomal subunit protein bL33 (56 aa).

The protein belongs to the bacterial ribosomal protein bL33 family.

This chain is Large ribosomal subunit protein bL33, found in Ehrlichia canis (strain Jake).